The primary structure comprises 589 residues: Probable galacturonosyltransferase 6 (589 aa).

At 1–6 (MKQIRR) the chain is on the cytoplasmic side. The helical; Signal-anchor for type II membrane protein transmembrane segment at 7–27 (WQRILILALLSISVFAPLIFV) threads the bilayer. Residues 28–589 (SNRLKSITPV…TYLQQCNLQA (562 aa)) are Lumenal-facing. N83 and N126 each carry an N-linked (GlcNAc...) asparagine glycan. The segment at 127–151 (KTDFKPPLSKGEKNTRVQPDRATDV) is disordered. A compositionally biased stretch (basic and acidic residues) spans 136–151 (KGEKNTRVQPDRATDV). Residues N317 and N454 are each glycosylated (N-linked (GlcNAc...) asparagine).

The protein belongs to the glycosyltransferase 8 family. In terms of tissue distribution, expressed in roots, inflorescences, siliques, leaves and stems.

Its subcellular location is the golgi apparatus membrane. Its pathway is glycan metabolism; pectin biosynthesis. Its function is as follows. Probably involved in pectin biosynthesis in cell walls. The chain is Probable galacturonosyltransferase 6 (GAUT6) from Arabidopsis thaliana (Mouse-ear cress).